Here is a 342-residue protein sequence, read N- to C-terminus: Arginase 1, mitochondrial (342 aa).

Residues 1–22 constitute a mitochondrion transit peptide; the sequence is MSRIIGRKGINYIHRLNSASFT. L-ornithine is bound by residues Ser-77 and 96–99; that span reads GSTN. Mn(2+)-binding residues include His-161, Asp-185, His-187, and Asp-189. 189–191 is an L-ornithine binding site; sequence DIY. 195 to 197 is a substrate binding site; the sequence is EGN. Ser-224 contributes to the L-ornithine binding site. 2 residues coordinate Mn(2+): Asp-270 and Asp-272. A substrate-binding site is contributed by Glu-313.

It belongs to the arginase family. Forms homohexamers. The cofactor is Mn(2+). In terms of tissue distribution, expressed in vasculature of roots, root tips, cotyledons, leaves, cauline leaves, stems, sepals and pollen.

The protein localises to the mitochondrion. It catalyses the reaction L-arginine + H2O = urea + L-ornithine. The catalysed reaction is agmatine + H2O = urea + putrescine. Its pathway is nitrogen metabolism; urea cycle; L-ornithine and urea from L-arginine: step 1/1. The protein operates within amine and polyamine biosynthesis; putrescine biosynthesis via agmatine pathway; putrescine from agmatine: step 1/1. Catalyzes the hydrolysis of L-arginine to urea and L-ornithine. The latter can be utilized in the urea cycle or as a precursor for the synthesis of both polyamines and proline. Possesses agmatinase activity. Catalyzes the formation of putrescine from agmatine. This Arabidopsis thaliana (Mouse-ear cress) protein is Arginase 1, mitochondrial.